We begin with the raw amino-acid sequence, 978 residues long: Alanine--tRNA ligase, chloroplastic/mitochondrial (978 aa).

Histidine 655, histidine 659, cysteine 758, and histidine 762 together coordinate Zn(2+). Lysine 773 participates in a covalent cross-link: Glycyl lysine isopeptide (Lys-Gly) (interchain with G-Cter in ubiquitin).

The protein belongs to the class-II aminoacyl-tRNA synthetase family. Monomer. Zn(2+) serves as cofactor.

It is found in the plastid. It localises to the chloroplast. The protein resides in the mitochondrion. It carries out the reaction tRNA(Ala) + L-alanine + ATP = L-alanyl-tRNA(Ala) + AMP + diphosphate. Functionally, catalyzes the attachment of alanine to tRNA(Ala) in a two-step reaction: alanine is first activated by ATP to form Ala-AMP and then transferred to the acceptor end of tRNA(Ala). Also edits incorrectly charged tRNA(Ala) via its editing domain. This is Alanine--tRNA ligase, chloroplastic/mitochondrial (EMB86) from Arabidopsis thaliana (Mouse-ear cress).